We begin with the raw amino-acid sequence, 206 residues long: Small ribosomal subunit protein uS4 (206 aa).

Residues 96-156 (CRLDNVVYRM…EKAKNQLRIV (61 aa)) enclose the S4 RNA-binding domain.

This sequence belongs to the universal ribosomal protein uS4 family. Part of the 30S ribosomal subunit. Contacts protein S5. The interaction surface between S4 and S5 is involved in control of translational fidelity.

In terms of biological role, one of the primary rRNA binding proteins, it binds directly to 16S rRNA where it nucleates assembly of the body of the 30S subunit. Functionally, with S5 and S12 plays an important role in translational accuracy. This chain is Small ribosomal subunit protein uS4, found in Pseudomonas fluorescens (strain ATCC BAA-477 / NRRL B-23932 / Pf-5).